A 261-amino-acid polypeptide reads, in one-letter code: Indole-3-glycerol phosphate synthase (261 aa).

This sequence belongs to the TrpC family.

The catalysed reaction is 1-(2-carboxyphenylamino)-1-deoxy-D-ribulose 5-phosphate + H(+) = (1S,2R)-1-C-(indol-3-yl)glycerol 3-phosphate + CO2 + H2O. It functions in the pathway amino-acid biosynthesis; L-tryptophan biosynthesis; L-tryptophan from chorismate: step 4/5. This Burkholderia thailandensis (strain ATCC 700388 / DSM 13276 / CCUG 48851 / CIP 106301 / E264) protein is Indole-3-glycerol phosphate synthase.